Reading from the N-terminus, the 446-residue chain is Methionine aminopeptidase 2 (446 aa).

Residues 1–91 (MAAQVTDALK…PPRVLLSNLF (91 aa)) are disordered. Over residues 36–48 (EAEDSDDEEEEPV) the composition is skewed to acidic residues. The segment covering 59–72 (KKKRKRKKKPKKKA) has biased composition (basic residues). H199 is a substrate binding site. D219, D230, and H299 together coordinate a divalent metal cation. H307 lines the substrate pocket. A divalent metal cation is bound by residues E332 and E427.

It belongs to the peptidase M24A family. Methionine aminopeptidase eukaryotic type 2 subfamily. Co(2+) serves as cofactor. Requires Zn(2+) as cofactor. It depends on Mn(2+) as a cofactor. The cofactor is Fe(2+).

The protein localises to the cytoplasm. The enzyme catalyses Release of N-terminal amino acids, preferentially methionine, from peptides and arylamides.. Cotranslationally removes the N-terminal methionine from nascent proteins. The N-terminal methionine is often cleaved when the second residue in the primary sequence is small and uncharged (Met-Ala-, Cys, Gly, Pro, Ser, Thr, or Val). The polypeptide is Methionine aminopeptidase 2 (Sclerotinia sclerotiorum (strain ATCC 18683 / 1980 / Ss-1) (White mold)).